The chain runs to 195 residues: Shikimate kinase (195 aa).

Position 26 to 31 (26 to 31) interacts with ATP; that stretch reads GSGKST. Ser30 is a Mg(2+) binding site. Asp48, Arg72, and Gly94 together coordinate substrate. Residue Arg132 participates in ATP binding. Arg151 is a binding site for substrate.

It belongs to the shikimate kinase family. Monomer. Mg(2+) serves as cofactor.

The protein resides in the cytoplasm. It carries out the reaction shikimate + ATP = 3-phosphoshikimate + ADP + H(+). The protein operates within metabolic intermediate biosynthesis; chorismate biosynthesis; chorismate from D-erythrose 4-phosphate and phosphoenolpyruvate: step 5/7. In terms of biological role, catalyzes the specific phosphorylation of the 3-hydroxyl group of shikimic acid using ATP as a cosubstrate. The protein is Shikimate kinase of Synechococcus sp. (strain RCC307).